A 475-amino-acid chain; its full sequence is Beta-amyrin 28-monooxygenase (475 aa).

A helical transmembrane segment spans residues 2–22; that stretch reads YLTILFLFVSSILLSLMFLLR. Cys422 is a binding site for heme.

The protein belongs to the cytochrome P450 family. Heme serves as cofactor.

It localises to the membrane. The enzyme catalyses beta-amyrin + 3 reduced [NADPH--hemoprotein reductase] + 3 O2 = oleanolate + 3 oxidized [NADPH--hemoprotein reductase] + 4 H2O + 4 H(+). Functionally, catalyzes the oxidation of the methyl group to a carboxyl group at the C-28 position of beta-amyrin to form oleanolate. The sequence is that of Beta-amyrin 28-monooxygenase from Barbarea vulgaris (Yellow rocket).